The sequence spans 366 residues: Small ribosomal subunit biogenesis GTPase RsgA (366 aa).

Residues 107–266 enclose the CP-type G domain; it reads RSEGQILAAN…LIDTPGLRGV (160 aa). Residues 154–157 and 208–216 contribute to the GTP site; these read TKAD and GQSGAGKST. Zn(2+) is bound by residues Cys289, Cys294, His296, and Cys302.

This sequence belongs to the TRAFAC class YlqF/YawG GTPase family. RsgA subfamily. As to quaternary structure, monomer. Associates with 30S ribosomal subunit, binds 16S rRNA. Requires Zn(2+) as cofactor.

It is found in the cytoplasm. One of several proteins that assist in the late maturation steps of the functional core of the 30S ribosomal subunit. Helps release RbfA from mature subunits. May play a role in the assembly of ribosomal proteins into the subunit. Circularly permuted GTPase that catalyzes slow GTP hydrolysis, GTPase activity is stimulated by the 30S ribosomal subunit. This Streptomyces coelicolor (strain ATCC BAA-471 / A3(2) / M145) protein is Small ribosomal subunit biogenesis GTPase RsgA.